Reading from the N-terminus, the 283-residue chain is ACT domain-containing protein DS12, chloroplastic (283 aa).

A chloroplast-targeting transit peptide spans M1–R56. Residues S14–K78 are disordered. Low complexity predominate over residues S48–V63. ACT domains follow at residues I91 to Q171 and L206 to P276.

Its subcellular location is the plastid. The protein resides in the chloroplast. In Oryza sativa subsp. indica (Rice), this protein is ACT domain-containing protein DS12, chloroplastic.